The sequence spans 506 residues: 5'-3' exonuclease PLD4 (506 aa).

A helical membrane pass occupies residues 31–51; the sequence is LQVLGALAVLWLGSVALICLL. A disulfide bridge connects residues Cys-94 and Cys-250. N-linked (GlcNAc...) asparagine glycosylation is found at Asn-150 and Asn-171. Residues 209–236 enclose the PLD phosphodiesterase 1 domain; that stretch reads TRGVLHSKFWVVDGRHIYMGSANMDWRS. Catalysis depends on His-214, which acts as the Proton donor. Catalysis depends on residues Lys-216 and Asp-221. N-linked (GlcNAc...) asparagine glycans are attached at residues Asn-249, Asn-281, Asn-403, Asn-417, and Asn-427. An intrachain disulfide couples Cys-379 to Cys-502. Residues 423-449 form the PLD phosphodiesterase 2 domain; the sequence is FSRVNHSKFMVTEKAAYIGTSNWSEDY. His-428 functions as the Nucleophile in the catalytic mechanism. The N-linked (GlcNAc...) asparagine glycan is linked to Asn-444.

This sequence belongs to the phospholipase D family. In terms of assembly, homodimer. Post-translationally, highly N-glycosylated. As to expression, expressed in plasmacytoid dendritic cells and monocytes (at protein level).

It is found in the endoplasmic reticulum membrane. The protein localises to the golgi apparatus. Its subcellular location is the trans-Golgi network membrane. The protein resides in the nucleus. It localises to the early endosome. It is found in the cytoplasmic vesicle. The protein localises to the phagosome. Its subcellular location is the lysosome. It carries out the reaction Exonucleolytic cleavage in the 5'- to 3'-direction to yield nucleoside 3'-phosphates.. It catalyses the reaction a 5'-end 5'-dephospho-ribonucleotidyl-ribonucleotide-RNA + H2O = a ribonucleoside 3'-phosphate + a 5'-end dephospho-ribonucleoside-RNA + H(+). The enzyme catalyses a ribonucleoside 3'-phosphate-2'-3'-cyclophospho-GMP + H2O = a ribonucleoside 3'-phosphate + 2',3'-cyclophospho-GMP + H(+). The catalysed reaction is a 5'-end 5'-dephospho-2'-deoxyribonucleotidyl-2'-deoxyribonucleotide in single-stranded DNA + H2O = a 5'-end dephospho-2'-deoxyribonucleoside in single-stranded DNA + a 2'-deoxyribonucleoside 3'-phosphate + H(+). It carries out the reaction a 5'-end 5'-phospho-2'-deoxyribonucleotide in single-stranded DNA + H2O = a 5'-end 5'-dephospho-2'-deoxyribonucleotide in single-stranded DNA + phosphate. It catalyses the reaction a 3-lyso-sn-glycero-1-phospho-(3'-acyl-1'-sn-glycerol) + a 1-acyl-sn-glycerol = a 3-acyl-sn-glycero-1-phospho-(3'-acyl-1'-sn-glycerol) + glycerol. The enzyme catalyses 3-lyso-sn-glycero-1-phospho-(3'-(9Z-octadecenoyl)-1'-sn-glycerol) + 1-(9Z-octadecenoyl)-sn-glycerol = 3-(9Z-octadecenoyl)-sn-glycero-1-phospho-(3'-(9Z-octadecenoyl)-1'-sn-glycerol) + glycerol. The exonuclease activity toward ssDNA substrate is Ca(2+) and Mg(2+)-independent, but it is inhibited by Fe(2+), Cu(2+) and to a lesser extent Zn(2+) ions. Functionally, 5'-&gt;3' exonuclease that hydrolyzes the phosphodiester bond of single-stranded DNA (ssDNA) and RNA molecules to form nucleoside 3'-monophosphates and 5'-end 5'-hydroxy deoxyribonucleotide/ribonucleotide fragments. Partially redundant with PLD3, can cleave all four nucleotides displaying higher efficiency for ssDNA and RNA fragments initiated with uridine and guanosine residues and lower efficiency for cytidine-initiated substrates. As a result, it does not always degrade polynucleotides to the single nucleotide level, it can stall at specific sites sparing certain fragments from exonucleolytic degradation. Processes self and pathogenic ssDNA and RNA molecules that reach the endolysosomal compartment via phagocytosis or autophagy and may serve as 'danger' signals for recognition by innate immune receptors such as toll-like receptors (TLRs). Degrades mitochondrial CpG-rich ssDNA fragments to prevent TLR9 activation and autoinflammatory response, but it can cleave viral RNA to generate ligands for TLR7 activation and initiate antiviral immune responses. In plasmacytoid dendritic cells, it cooperates with endonuclease RNASET2 to release 2',3'-cyclic guanosine monophosphate (2',3'-cGMP), a potent stimulatory ligand for TLR7. Produces 2',3'-cGMPs and cytidine-rich RNA fragments that occupy TLR7 ligand-binding pockets and trigger a signaling-competent state. Can exert polynucleotide phosphatase activity toward 5'-phosphorylated ssDNA substrates although at a slow rate. Transphosphatidylase that catalyzes the exchange with R to S stereo-inversion of the glycerol moiety between (S,R)-lysophosphatidylglycerol (LPG) and monoacylglycerol (MAG) substrates to yield (S,S)-bis(monoacylglycero)phosphate (BMP). Can synthesize a variety of (S,S)-BMPs representing the main phospholipid constituent of lysosomal intralumenal vesicle (ILV) membranes that bind acid hydrolases for lipid degradation. Regulates the homeostasis and interorganellar communication of the endolysosomal system with an overall impact on cellular removal of dysfunctional organelles via autophagy as well as proper protein and lipid turnover. May play a role in myotube formation in response to ER stress. The polypeptide is 5'-3' exonuclease PLD4 (Homo sapiens (Human)).